We begin with the raw amino-acid sequence, 148 residues long: MKPRNRRIALIVAGLSALGIATALVLNAFQSNLVFFFTPSQVSAGEAPLERTFRVGGMVERGSLKRQRGELAVQFVITDTVKAIPVTYSGILPDLFSEGKGVVVQGRLDSAGLFRAEEVLAKHDENYMPPEAQHALDEVQKKPASRKP.

Over Met1 to Arg7 the chain is Cytoplasmic. The helical; Signal-anchor for type II membrane protein transmembrane segment at Ile8–Ala28 threads the bilayer. At Phe29–Pro148 the chain is on the periplasmic side. Heme contacts are provided by His123 and Tyr127. The disordered stretch occupies residues Met128 to Pro148.

This sequence belongs to the CcmE/CycJ family.

Its subcellular location is the cell inner membrane. Heme chaperone required for the biogenesis of c-type cytochromes. Transiently binds heme delivered by CcmC and transfers the heme to apo-cytochromes in a process facilitated by CcmF and CcmH. The chain is Cytochrome c-type biogenesis protein CcmE from Pseudomonas aeruginosa.